Consider the following 443-residue polypeptide: Protein translocase subunit SecY (443 aa).

The next 10 helical transmembrane spans lie at Leu-24–Ile-44, Ile-77–Val-97, Leu-125–Met-145, Phe-154–Leu-174, Ile-183–Ile-203, Phe-217–Val-237, Val-274–Phe-294, Tyr-317–Phe-337, Met-370–Phe-390, and Val-397–Met-417.

The protein belongs to the SecY/SEC61-alpha family. As to quaternary structure, component of the Sec protein translocase complex. Heterotrimer consisting of SecY, SecE and SecG subunits. The heterotrimers can form oligomers, although 1 heterotrimer is thought to be able to translocate proteins. Interacts with the ribosome. Interacts with SecDF, and other proteins may be involved. Interacts with SecA.

Its subcellular location is the cell inner membrane. In terms of biological role, the central subunit of the protein translocation channel SecYEG. Consists of two halves formed by TMs 1-5 and 6-10. These two domains form a lateral gate at the front which open onto the bilayer between TMs 2 and 7, and are clamped together by SecE at the back. The channel is closed by both a pore ring composed of hydrophobic SecY resides and a short helix (helix 2A) on the extracellular side of the membrane which forms a plug. The plug probably moves laterally to allow the channel to open. The ring and the pore may move independently. In Escherichia coli O157:H7, this protein is Protein translocase subunit SecY.